Here is a 139-residue protein sequence, read N- to C-terminus: ATP synthase epsilon chain (139 aa).

It belongs to the ATPase epsilon chain family. In terms of assembly, F-type ATPases have 2 components, CF(1) - the catalytic core - and CF(0) - the membrane proton channel. CF(1) has five subunits: alpha(3), beta(3), gamma(1), delta(1), epsilon(1). CF(0) has three main subunits: a, b and c.

It is found in the cell membrane. Produces ATP from ADP in the presence of a proton gradient across the membrane. The polypeptide is ATP synthase epsilon chain (Streptococcus pneumoniae serotype 2 (strain D39 / NCTC 7466)).